The primary structure comprises 861 residues: DNA mismatch repair protein MutS (861 aa).

ATP is bound at residue 616–623; that stretch reads GPNMGGKS.

It belongs to the DNA mismatch repair MutS family.

In terms of biological role, this protein is involved in the repair of mismatches in DNA. It is possible that it carries out the mismatch recognition step. This protein has a weak ATPase activity. The chain is DNA mismatch repair protein MutS from Haemophilus influenzae (strain 86-028NP).